Consider the following 77-residue polypeptide: Conotoxin Cl6.12 (77 aa).

Residues 1 to 20 form the signal peptide; it reads MKFYLLLTAALLLTAVIIEA. The propeptide occupies 21–36; that stretch reads APTDHQDEARDLMREE. 3 disulfide bridges follow: Cys-43–Cys-58, Cys-51–Cys-62, and Cys-57–Cys-68.

Expressed by the venom duct.

The protein localises to the secreted. The polypeptide is Conotoxin Cl6.12 (Californiconus californicus (California cone)).